A 225-amino-acid polypeptide reads, in one-letter code: Late embryogenesis abundant protein 29 (225 aa).

2 disordered regions span residues 1–167 and 193–225; these read MASN…GGFL and TEEE…YQRK. 4 stretches are compositionally biased toward basic and acidic residues: residues 28 to 39, 49 to 61, 71 to 83, and 93 to 119; these read MRDKAEEGRDKT, KAHE…KDKT, KAHE…KEKT, and KAHE…KDKA. LEA 11-mer repeat repeat units follow at residues 53–63, 75–85, and 97–107; these read TAQSAKDKTSQ, TAQSAKEKTSQ, and TTQAAKEKTSQ. The span at 141–153 shows a compositional bias: polar residues; sequence TKETAQGAAQYTK. The segment covering 154–163 has biased composition (basic and acidic residues); that stretch reads ETAEAGRDKT. Positions 205-225 are enriched in low complexity; that stretch reads TTTTTATTRTTDPTHQTYQRK.

This sequence belongs to the LEA type 4 family.

The protein resides in the cytoplasm. Its subcellular location is the cytosol. Involved dehydration tolerance. The protein is Late embryogenesis abundant protein 29 of Arabidopsis thaliana (Mouse-ear cress).